The chain runs to 124 residues: Late embryogenesis abundant protein 37 (124 aa).

The N-terminal 35 residues, 1-35 (MSQSLFNLKSLSRSINNTIRMRRYIVITKASQRAY), are a transit peptide targeting the mitochondrion.

This sequence belongs to the LEA type 3 family.

It is found in the mitochondrion. This is Late embryogenesis abundant protein 37 from Arabidopsis thaliana (Mouse-ear cress).